A 310-amino-acid chain; its full sequence is Probable cell division protein WhiA (310 aa).

The H-T-H motif DNA-binding region spans 274 to 308 (SLKELGTLVPGGPISKSGINHRLRKINQFAEQLQK).

The protein belongs to the WhiA family.

In terms of biological role, involved in cell division and chromosome segregation. This chain is Probable cell division protein WhiA, found in Lactiplantibacillus plantarum (strain ATCC BAA-793 / NCIMB 8826 / WCFS1) (Lactobacillus plantarum).